A 201-amino-acid polypeptide reads, in one-letter code: Small ribosomal subunit protein uS4 (201 aa).

Residues S27 to Y47 form a disordered region. In terms of domain architecture, S4 RNA-binding spans G92–A152.

It belongs to the universal ribosomal protein uS4 family. In terms of assembly, part of the 30S ribosomal subunit. Contacts protein S5. The interaction surface between S4 and S5 is involved in control of translational fidelity.

In terms of biological role, one of the primary rRNA binding proteins, it binds directly to 16S rRNA where it nucleates assembly of the body of the 30S subunit. With S5 and S12 plays an important role in translational accuracy. The sequence is that of Small ribosomal subunit protein uS4 from Parabacteroides distasonis (strain ATCC 8503 / DSM 20701 / CIP 104284 / JCM 5825 / NCTC 11152).